Here is a 313-residue protein sequence, read N- to C-terminus: UDP-glucose 4-epimerase (313 aa).

NAD(+)-binding positions include F11–I12, D31–G36, D56–I57, and L77–I81. 2 residues coordinate substrate: S121 and Y146. Positions 146 and 150 each coordinate NAD(+). The Proton acceptor role is filled by Y146. Substrate contacts are provided by residues N175, V189–V190, K204–F206, R213, and R271–D274.

This sequence belongs to the NAD(P)-dependent epimerase/dehydratase family. In terms of assembly, homodimer. It depends on NAD(+) as a cofactor.

The enzyme catalyses UDP-alpha-D-glucose = UDP-alpha-D-galactose. It participates in carbohydrate metabolism; galactose metabolism. Functionally, involved in the metabolism of galactose. Catalyzes the conversion of UDP-galactose (UDP-Gal) to UDP-glucose (UDP-Glc) through a mechanism involving the transient reduction of NAD. This Mycolicibacterium smegmatis (strain ATCC 700084 / mc(2)155) (Mycobacterium smegmatis) protein is UDP-glucose 4-epimerase.